Consider the following 251-residue polypeptide: Imidazole glycerol phosphate synthase subunit HisF (251 aa).

Residues Asp-10 and Asp-129 contribute to the active site.

It belongs to the HisA/HisF family. Heterodimer of HisH and HisF.

The protein localises to the cytoplasm. It carries out the reaction 5-[(5-phospho-1-deoxy-D-ribulos-1-ylimino)methylamino]-1-(5-phospho-beta-D-ribosyl)imidazole-4-carboxamide + L-glutamine = D-erythro-1-(imidazol-4-yl)glycerol 3-phosphate + 5-amino-1-(5-phospho-beta-D-ribosyl)imidazole-4-carboxamide + L-glutamate + H(+). The protein operates within amino-acid biosynthesis; L-histidine biosynthesis; L-histidine from 5-phospho-alpha-D-ribose 1-diphosphate: step 5/9. Its function is as follows. IGPS catalyzes the conversion of PRFAR and glutamine to IGP, AICAR and glutamate. The HisF subunit catalyzes the cyclization activity that produces IGP and AICAR from PRFAR using the ammonia provided by the HisH subunit. The chain is Imidazole glycerol phosphate synthase subunit HisF from Cutibacterium acnes (strain DSM 16379 / KPA171202) (Propionibacterium acnes).